A 410-amino-acid polypeptide reads, in one-letter code: Provicilin (410 aa).

The first 15 residues, 1–15 (MLLAIAFLASVCVSS), serve as a signal peptide directing secretion. The region spanning 23-181 (FIFKSNRFQT…AFNTNYEEIE (159 aa)) is the Cupin type-1 1 domain. Disordered regions lie at residues 223–242 (SKNA…GPFN) and 312–331 (QRNE…EEET). Over residues 225–238 (NAKSSSKKSVSSES) the composition is skewed to low complexity. Residues 241–409 (FNLRSRNPIY…AFPGSSHEVD (169 aa)) form the Cupin type-1 2 domain. A glycan (N-linked (GlcNAc...) asparagine) is linked at N359.

It belongs to the 7S seed storage protein family.

It localises to the vacuole. It is found in the aleurone grain. Seed storage protein. The protein is Provicilin of Pisum sativum (Garden pea).